The following is a 66-amino-acid chain: U-scoloptoxin(24)-Er2a (66 aa).

An N-terminal signal peptide occupies residues 1 to 23 (MVKPLHCLIGIVLFLAVLNAGNG). Positions 43-66 (SLFHGNQRKKRSEEKRFSDMEQTK) are disordered. Basic and acidic residues predominate over residues 53 to 66 (RSEEKRFSDMEQTK).

This sequence belongs to the scoloptoxin-24 family. In terms of tissue distribution, expressed by the venom gland.

Its subcellular location is the secreted. This chain is U-scoloptoxin(24)-Er2a, found in Ethmostigmus rubripes (Giant centipede).